We begin with the raw amino-acid sequence, 60 residues long: Large ribosomal subunit protein bL32 (60 aa).

A disordered region spans residues M1–D60. A compositionally biased stretch (basic residues) spans K7–R16. Polar residues predominate over residues L22–K31.

This sequence belongs to the bacterial ribosomal protein bL32 family.

This chain is Large ribosomal subunit protein bL32, found in Francisella tularensis subsp. tularensis (strain SCHU S4 / Schu 4).